Here is a 690-residue protein sequence, read N- to C-terminus: Elongation factor G (690 aa).

The tr-type G domain maps to 8-282 (KMTRNIGIMA…AVIDYLPSPL (275 aa)). GTP-binding positions include 17–24 (AHIDAGKT), 81–85 (DTPGH), and 135–138 (NKMD).

This sequence belongs to the TRAFAC class translation factor GTPase superfamily. Classic translation factor GTPase family. EF-G/EF-2 subfamily.

Its subcellular location is the cytoplasm. Its function is as follows. Catalyzes the GTP-dependent ribosomal translocation step during translation elongation. During this step, the ribosome changes from the pre-translocational (PRE) to the post-translocational (POST) state as the newly formed A-site-bound peptidyl-tRNA and P-site-bound deacylated tRNA move to the P and E sites, respectively. Catalyzes the coordinated movement of the two tRNA molecules, the mRNA and conformational changes in the ribosome. The sequence is that of Elongation factor G from Acholeplasma laidlawii (strain PG-8A).